The primary structure comprises 801 residues: Na(+)/H(+) antiporter subunit A1 (801 aa).

The next 21 helical transmembrane spans lie at 4–25 (LHIA…YRFF), 30–49 (LGWF…LTLI), 79–101 (LGLL…SIGY), 108–127 (LGNF…GVVL), 131–153 (VIIL…SFWR), 166–188 (LIIT…IPTQ), 208–230 (FIFA…PFYI), 243–265 (SAYL…MTPI), 270–289 (QGWV…WASL), 302–324 (AFST…ISYH), 339–361 (AAIF…TGAV), 373–395 (LGGL…LSMA), 429–451 (YLFP…KFIM), 472–494 (ILML…FPGI), 526–548 (AFLS…SYWV), 589–611 (NNLV…SVPF), 621–641 (IRIF…LILF), 646–668 (LFSI…FFKA), 672–694 (ALTQ…YHLP), 707–729 (LTNA…IAYG), and 767–784 (LFES…YTMI).

It belongs to the CPA3 antiporters (TC 2.A.63) subunit A family. May form a heterooligomeric complex that consists of seven subunits: mnhA1, mnhB1, mnhC1, mnhD1, mnhE1, mnhF1 and mnhG1.

It localises to the cell membrane. Na(+) extrusion is completely inhibited by the H(+) conductor carbonyl cyanide m-chlorophenylhydrazone (CCCP). Its function is as follows. Mnh complex is a Na(+)/H(+) antiporter involved in Na(+) excretion. This chain is Na(+)/H(+) antiporter subunit A1 (mnhA1), found in Staphylococcus aureus (strain MSSA476).